We begin with the raw amino-acid sequence, 745 residues long: Pentatricopeptide repeat-containing protein At1g71420 (745 aa).

PPR repeat units follow at residues 58–88 (SQQA…MLSH), 95–125 (NVIL…MPER), 126–160 (NVVS…CFPN), 191–224 (SIYV…IKFK), 225–259 (NLVT…GVGF), 260–296 (DRAT…TVKS), 301–332 (QTEV…MSHC), 334–367 (DIVA…KLSP), 368–402 (DWYT…GFLA), 403–437 (DTVL…DVVS), 438–464 (WNSM…MDIN), 466–496 (DSAT…MFEK), and 502–532 (QLNH…MPMD). Positions 537–613 (VWIALLGSCR…EPDLSWTEIG (77 aa)) are type E motif. Residues 614–644 (NKVHEFASGGRHRPDKEAVYRELKRLISWLK) form a type E(+) motif region. A type DYW motif region spans residues 645-745 (EMGYVPEMRS…DSSCSCNDYW (101 aa)).

The protein belongs to the PPR family. PCMP-H subfamily.

This is Pentatricopeptide repeat-containing protein At1g71420 (PCMP-H70) from Arabidopsis thaliana (Mouse-ear cress).